The chain runs to 461 residues: Photosystem II CP43 reaction center protein (461 aa).

The Cytoplasmic segment spans residues 1–48; that stretch reads MVTLSSNSIFATNRDQESSGFAWWAGNARLINLSGKLLGAHVAHAGLI. The chain crosses the membrane as a helical span at residues 49–71; it reads VFWAGAMTLFELAHFIPEKPMYE. At 72–111 the chain is on the lumenal side; the sequence is QGLILIPHIATLGWGVGPGGEVVDTFPFFVVGVVHLISSA. Residues 112–133 form a helical membrane-spanning segment; it reads VLGFGGVYHAIRGPETLEEYSS. The Cytoplasmic segment spans residues 134 to 155; that stretch reads FFGYDWKDKNKMTTILGFHLIV. The helical transmembrane segment at 156–178 threads the bilayer; it reads LGIGALLLVAKAMFFGGLYDTWA. Residues 179 to 232 lie on the Lumenal side of the membrane; the sequence is PGGGDVRVITNPTLDPRVIFGYLLKSPFGGEGWIVSVNNLEDVVGGHIWIGLIC. The chain crosses the membrane as a helical span at residues 233 to 253; the sequence is IAGGIWHILTTPFGWARRAFI. The Cytoplasmic segment spans residues 254–268; that stretch reads WSGEAYLSYSLGALS. Residues 269-289 form a helical membrane-spanning segment; sequence MMGFIATCFVWFNNTVYPSEF. Residues 290 to 424 are Lumenal-facing; the sequence is YGPTGPEASQ…ATSHFVLAFF (135 aa). Position 355 (E355) interacts with [CaMn4O5] cluster. Residues 425 to 449 traverse the membrane as a helical segment; it reads FLVGHLWHAGRARAAAAGFEKGIDR. At 450–461 the chain is on the cytoplasmic side; that stretch reads ESEPVLSMPSLD.

PSII is composed of 1 copy each of membrane proteins PsbA, PsbB, PsbC, PsbD, PsbE, PsbF, PsbH, PsbI, PsbJ, PsbK, PsbL, PsbM, PsbT, PsbX, PsbY, PsbZ, Psb30/Ycf12, peripheral proteins PsbO, CyanoQ (PsbQ), PsbU, PsbV and a large number of cofactors. It forms dimeric complexes. Part of a photosystem II (PSII) assembly intermediate complex PSII-I; crystallized from a strain deleted of psbJ, it forms monomeric PSII before addition of the oxygen evolving complex. PSII-I includes 3 assembly factors not found in mature PSII (Psb27, Psb28 and Psb34), and CP43 (this protein) is not in its mature conformation. Binds multiple chlorophylls and provides some of the ligands for the Ca-4Mn-5O cluster of the oxygen-evolving complex. It may also provide a ligand for a Cl- that is required for oxygen evolution. PSII binds additional chlorophylls, carotenoids and specific lipids. is required as a cofactor.

It localises to the cellular thylakoid membrane. Its function is as follows. One of the components of the core complex of photosystem II (PSII). It binds chlorophyll and helps catalyze the primary light-induced photochemical processes of PSII. PSII is a light-driven water:plastoquinone oxidoreductase, using light energy to abstract electrons from H(2)O, generating O(2) and a proton gradient subsequently used for ATP formation. The polypeptide is Photosystem II CP43 reaction center protein (Thermosynechococcus vestitus (strain NIES-2133 / IAM M-273 / BP-1)).